The following is a 640-amino-acid chain: Sodium-dependent nutrient amino acid transporter 1 (640 aa).

The span at Met-1 to Asn-13 shows a compositional bias: low complexity. Residues Met-1–Lys-25 form a disordered region. The Cytoplasmic portion of the chain corresponds to Met-1 to Asn-30. Positions Glu-16–Lys-25 are enriched in basic and acidic residues. The next 3 helical transmembrane spans lie at Trp-31–Val-51, Gly-64–Leu-84, and Thr-117–Val-137. 3 N-linked (GlcNAc...) asparagine glycosylation sites follow: Asn-174, Asn-181, and Asn-197. The next 9 helical transmembrane spans lie at Pro-228–Met-248, Ala-257–Val-277, Ala-306–Ser-326, Ile-340–Leu-360, Leu-400–Leu-420, Cys-447–Val-467, Thr-473–Leu-493, Cys-515–Ile-535, and Val-551–Tyr-571.

This sequence belongs to the sodium:neurotransmitter symporter (SNF) (TC 2.A.22) family.

The protein resides in the membrane. Its function is as follows. Unusual broad substrate spectrum amino acid:sodium cotransporter that promotes absorption of the D isomers of essential amino acids. Neutral amino acids are the preferred substrates, especially methionine and phenylalanine. The sequence is that of Sodium-dependent nutrient amino acid transporter 1 from Drosophila ananassae (Fruit fly).